Reading from the N-terminus, the 468-residue chain is 3-isopropylmalate dehydratase large subunit (468 aa).

3 residues coordinate [4Fe-4S] cluster: C349, C409, and C412.

Belongs to the aconitase/IPM isomerase family. LeuC type 1 subfamily. Heterodimer of LeuC and LeuD. [4Fe-4S] cluster is required as a cofactor.

The enzyme catalyses (2R,3S)-3-isopropylmalate = (2S)-2-isopropylmalate. It participates in amino-acid biosynthesis; L-leucine biosynthesis; L-leucine from 3-methyl-2-oxobutanoate: step 2/4. Its function is as follows. Catalyzes the isomerization between 2-isopropylmalate and 3-isopropylmalate, via the formation of 2-isopropylmaleate. This Ruegeria pomeroyi (strain ATCC 700808 / DSM 15171 / DSS-3) (Silicibacter pomeroyi) protein is 3-isopropylmalate dehydratase large subunit.